The chain runs to 534 residues: CTP synthase (534 aa).

The segment at 1–268 (MSVKYIFVTG…AKIVCKRLGL (268 aa)) is amidoligase domain. Ser14 is a CTP binding site. UTP is bound at residue Ser14. Position 15–20 (15–20 (GLGKGI)) interacts with ATP. Tyr55 is a binding site for L-glutamine. Residue Asp72 coordinates ATP. Residues Asp72 and Glu142 each coordinate Mg(2+). CTP contacts are provided by residues 149–151 (DIE), 189–194 (KTKPTQ), and Lys225. Residues 189 to 194 (KTKPTQ) and Lys225 contribute to the UTP site. Positions 293–534 (TIGLVGKYVE…VRAAYEYKTK (242 aa)) constitute a Glutamine amidotransferase type-1 domain. Gly355 is a binding site for L-glutamine. The Nucleophile; for glutamine hydrolysis role is filled by Cys382. L-glutamine contacts are provided by residues 383–386 (LGMQ), Glu406, and Arg462. Catalysis depends on residues His507 and Glu509.

The protein belongs to the CTP synthase family. In terms of assembly, homotetramer.

It catalyses the reaction UTP + L-glutamine + ATP + H2O = CTP + L-glutamate + ADP + phosphate + 2 H(+). It carries out the reaction L-glutamine + H2O = L-glutamate + NH4(+). The catalysed reaction is UTP + NH4(+) + ATP = CTP + ADP + phosphate + 2 H(+). It functions in the pathway pyrimidine metabolism; CTP biosynthesis via de novo pathway; CTP from UDP: step 2/2. Its activity is regulated as follows. Allosterically activated by GTP, when glutamine is the substrate; GTP has no effect on the reaction when ammonia is the substrate. The allosteric effector GTP functions by stabilizing the protein conformation that binds the tetrahedral intermediate(s) formed during glutamine hydrolysis. Inhibited by the product CTP, via allosteric rather than competitive inhibition. Its function is as follows. Catalyzes the ATP-dependent amination of UTP to CTP with either L-glutamine or ammonia as the source of nitrogen. Regulates intracellular CTP levels through interactions with the four ribonucleotide triphosphates. This Ruminiclostridium cellulolyticum (strain ATCC 35319 / DSM 5812 / JCM 6584 / H10) (Clostridium cellulolyticum) protein is CTP synthase.